A 241-amino-acid chain; its full sequence is MTDFSRADGRAVDQMRTVKITRGFTSNPAGSVLVEFGNTRVMCTASVELGVPRFKRDSGEGWLTAEYAMLPAATAERNARESMRGKVKGRTHEISRLIGRSLRAAVDLDELGENTINIDCDVLQADGGTRTASITGAYVALADAIAVLKEQGVVPGNPLKAAVAAVSVGVIDGQVCLDLPYEEDSRADVDMNVIMQGDRFVEIQGTGEHNTFDRDELAVILDFAQKGCQELFAAQKAALEQ.

Phosphate-binding positions include arginine 90 and 128-130; that span reads GTR.

It belongs to the RNase PH family. In terms of assembly, homohexameric ring arranged as a trimer of dimers.

It carries out the reaction tRNA(n+1) + phosphate = tRNA(n) + a ribonucleoside 5'-diphosphate. Phosphorolytic 3'-5' exoribonuclease that plays an important role in tRNA 3'-end maturation. Removes nucleotide residues following the 3'-CCA terminus of tRNAs; can also add nucleotides to the ends of RNA molecules by using nucleoside diphosphates as substrates, but this may not be physiologically important. Probably plays a role in initiation of 16S rRNA degradation (leading to ribosome degradation) during starvation. In Corynebacterium diphtheriae (strain ATCC 700971 / NCTC 13129 / Biotype gravis), this protein is Ribonuclease PH.